The chain runs to 362 residues: mRNA decay activator protein ZFP36L2 (362 aa).

Residues 100 to 109 (SFSENGERSQ) are compositionally biased toward basic and acidic residues. Residues 100 to 126 (SFSENGERSQHLLHLQQQQQQKAGAQV) are disordered. Over residues 111–120 (LLHLQQQQQQ) the composition is skewed to low complexity. An RNA-binding motif is present at residues 130-135 (RYKTEL). 2 C3H1-type zinc fingers span residues 130 to 158 (RYKTELCRPFEESGACKYGEKCQFAHGFH) and 168 to 196 (KYKTELCRTFHTIGFCPYGPRCHFIHNAE). Residues 147–188 (YGEKCQFAHGFHELRSLTRHPKYKTELCRTFHTIGFCPYGPR) form an RNA-binding region. Disordered stretches follow at residues 225–244 (DSPLLESPTSRTPPPQSSSS) and 306–362 (SESP…ISDD). Positions 327–346 (YLSGSLSSGSLSGSDSPTLD) are enriched in low complexity.

Post-translationally, phosphorylated.

It is found in the nucleus. Its subcellular location is the cytoplasm. In terms of biological role, zinc-finger RNA-binding protein that destabilizes several cytoplasmic AU-rich element (ARE)-containing mRNA transcripts by promoting their poly(A) tail removal or deadenylation, and hence provide a mechanism for attenuating protein synthesis. Acts as a 3'-untranslated region (UTR) ARE mRNA-binding adapter protein to communicate signaling events to the mRNA decay machinery. Functions by recruiting the CCR4-NOT deadenylase complex and probably other components of the cytoplasmic RNA decay machinery to the bound ARE-containing mRNAs, and hence promotes ARE-mediated mRNA deadenylation and decay processes. Binds to 3'-UTR ARE of numerous mRNAs. Also induces the degradation of ARE-containing mRNAs even in absence of poly(A) tail. Required for tubulogenesis during pronephros development. In Xenopus tropicalis (Western clawed frog), this protein is mRNA decay activator protein ZFP36L2 (zfp36l2).